The chain runs to 449 residues: Chromosomal replication initiator protein DnaA (449 aa).

The segment at 1 to 69 (MEKVWLEAQS…VEAISSLTSV (69 aa)) is domain I, interacts with DnaA modulators. Residues 69–112 (VKYQIEFKITEKIPLESKPVDNFTPVIKDNEPSKETNKNIDITA) form a domain II region. Residues 113-329 (NLNPKYTFDS…GMLIRLGAYA (217 aa)) are domain III, AAA+ region. ATP-binding residues include Gly157, Gly159, Lys160, and Thr161. Positions 330–449 (SLTGSEITLN…VENLKKELIT (120 aa)) are domain IV, binds dsDNA.

The protein belongs to the DnaA family. In terms of assembly, oligomerizes as a right-handed, spiral filament on DNA at oriC.

It localises to the cytoplasm. Plays an essential role in the initiation and regulation of chromosomal replication. ATP-DnaA binds to the origin of replication (oriC) to initiate formation of the DNA replication initiation complex once per cell cycle. Binds the DnaA box (a 9 base pair repeat at the origin) and separates the double-stranded (ds)DNA. Forms a right-handed helical filament on oriC DNA; dsDNA binds to the exterior of the filament while single-stranded (ss)DNA is stabiized in the filament's interior. The ATP-DnaA-oriC complex binds and stabilizes one strand of the AT-rich DNA unwinding element (DUE), permitting loading of DNA polymerase. After initiation quickly degrades to an ADP-DnaA complex that is not apt for DNA replication. Binds acidic phospholipids. The chain is Chromosomal replication initiator protein DnaA from Geotalea uraniireducens (strain Rf4) (Geobacter uraniireducens).